The primary structure comprises 691 residues: Proprotein convertase subtilisin/kexin type 9 (691 aa).

Residues 1–30 form the signal peptide; it reads MGIRCSTWLRWPLSPQLLLLLLLCPTGSRA. Positions 31–151 are excised as a propeptide; the sequence is QDEDGDYEEL…IEEDSLVFAQ (121 aa). Sulfotyrosine is present on Y37. S46 carries the post-translational modification Phosphoserine. Residues 154-441 form the Peptidase S8 domain; it reads PWNLERIIPA…QRVLTPNRVA (288 aa). Residues D185 and H225 each act as charge relay system in the active site. 2 disulfide bridges follow: C222–C254 and C322–C357. The Charge relay system role is filled by S385. Positions 449-691 are C-terminal domain; it reads ETGGQLLCRT…PSAKASWVHQ (243 aa). 3 cysteine pairs are disulfide-bonded: C456-C526, C476-C525, and C485-C508. Positions 495-497 match the Cell attachment site motif; the sequence is RGD. Residue N532 is glycosylated (N-linked (GlcNAc...) asparagine). Cystine bridges form between C533–C600, C551–C599, C561–C587, C607–C678, C625–C677, and C634–C653. The residue at position 687 (S687) is a Phosphoserine.

Belongs to the peptidase S8 family. As to quaternary structure, monomer. Can self-associate to form dimers and higher multimers which may have increased LDLR degrading activity. The precursor protein but not the mature protein may form multimers. Interacts with APOB, VLDLR, LRP8/APOER2 and BACE1. The full-length immature form (pro-PCSK9) interacts with SCNN1A, SCNN1B and SCNN1G. The pro-PCSK9 form (via C-terminal domain) interacts with LDLR. Interacts (via the C-terminal domain) with ANXA2 (via repeat Annexin 1); the interaction inhibits the degradation of LDLR. Ca(2+) serves as cofactor. Post-translationally, cleavage by furin and PCSK5 generates a truncated inactive protein that is unable to induce LDLR degradation. In terms of processing, undergoes autocatalytic cleavage in the endoplasmic reticulum to release the propeptide from the N-terminus and the cleavage of the propeptide is strictly required for its maturation and activation. The cleaved propeptide however remains associated with the catalytic domain through non-covalent interactions, preventing potential substrates from accessing its active site. As a result, it is secreted from cells as a propeptide-containing, enzymatically inactive protein. Phosphorylation protects the propeptide against proteolysis. As to expression, highly expressed in 12-day embryo. In the adult, strongly expressed in liver, small intestine, jejunum, and to a lesser extent in kidney, lung, spleen and thymus. Expression in the liver is up-regulated following partial hepatectomy.

Its subcellular location is the cytoplasm. It is found in the secreted. The protein resides in the endosome. The protein localises to the lysosome. It localises to the cell surface. Its subcellular location is the endoplasmic reticulum. It is found in the golgi apparatus. With respect to regulation, its proteolytic activity is autoinhibited by the non-covalent binding of the propeptide to the catalytic domain. Inhibited by EGTA. Functionally, crucial player in the regulation of plasma cholesterol homeostasis. Binds to low-density lipid receptor family members: low density lipoprotein receptor (LDLR), very low density lipoprotein receptor (VLDLR), apolipoprotein E receptor (LRP1/APOER) and apolipoprotein receptor 2 (LRP8/APOER2), and promotes their degradation in intracellular acidic compartments. Acts via a non-proteolytic mechanism to enhance the degradation of the hepatic LDLR through a clathrin LDLRAP1/ARH-mediated pathway. May prevent the recycling of LDLR from endosomes to the cell surface or direct it to lysosomes for degradation. Can induce ubiquitination of LDLR leading to its subsequent degradation. Inhibits intracellular degradation of APOB via the autophagosome/lysosome pathway in a LDLR-independent manner. Involved in the disposal of non-acetylated intermediates of BACE1 in the early secretory pathway. Inhibits epithelial Na(+) channel (ENaC)-mediated Na(+) absorption by reducing ENaC surface expression primarily by increasing its proteasomal degradation. Regulates neuronal apoptosis via modulation of LRP8/APOER2 levels and related anti-apoptotic signaling pathways. In Rattus norvegicus (Rat), this protein is Proprotein convertase subtilisin/kexin type 9 (Pcsk9).